The following is a 303-amino-acid chain: UDP-N-acetylenolpyruvoylglucosamine reductase (303 aa).

In terms of domain architecture, FAD-binding PCMH-type spans 29–196; sequence KIGGPADVLV…LEAVLQLEQK (168 aa). The active site involves arginine 174. The active-site Proton donor is serine 225. Glutamate 295 is a catalytic residue.

It belongs to the MurB family. It depends on FAD as a cofactor.

The protein resides in the cytoplasm. The enzyme catalyses UDP-N-acetyl-alpha-D-muramate + NADP(+) = UDP-N-acetyl-3-O-(1-carboxyvinyl)-alpha-D-glucosamine + NADPH + H(+). The protein operates within cell wall biogenesis; peptidoglycan biosynthesis. In terms of biological role, cell wall formation. The polypeptide is UDP-N-acetylenolpyruvoylglucosamine reductase (murB) (Bacillus subtilis (strain 168)).